An 86-amino-acid chain; its full sequence is Cell division topological specificity factor (86 aa).

This sequence belongs to the MinE family.

Its function is as follows. Prevents the cell division inhibition by proteins MinC and MinD at internal division sites while permitting inhibition at polar sites. This ensures cell division at the proper site by restricting the formation of a division septum at the midpoint of the long axis of the cell. This is Cell division topological specificity factor from Aliivibrio salmonicida (strain LFI1238) (Vibrio salmonicida (strain LFI1238)).